The primary structure comprises 377 residues: MMEFTIKRDYFITQLNDTLKAISPRTTLPILTGIKIDAKEHEVILTGSDSEISIEITIPKTVDGEDIVNISETGSVVLPGRFFVDIIKKLPGKDVKLSTNEQFQTLITSGHSEFNLSGLDPDQYPLLPQVSRDDAIQLSVKVLKNVIAQTNFAVSTSETRPVLTGVNWLIQENELICTATDSHRLAVRKLQLEDVSENKNVIIPGKALAELNKIMSDNEEDIDIFFASNQVLFKVGNVNFISRLLEGHYPDTTRLFPENYEIKLSIDNGEFYHAIDRASLLAREGGNNVIKLSTGDDVVELSSTSPEIGTVKEEVDANDVEGGSLKISFNSKYMMDALKAIDNDEVEVEFFGTMKPFILKPKGDDSVTQLILPIRTY.

The protein belongs to the beta sliding clamp family. In terms of assembly, forms a ring-shaped head-to-tail homodimer around DNA which binds and tethers DNA polymerases and other proteins to the DNA. The DNA replisome complex has a single clamp-loading complex (3 tau and 1 each of delta, delta', psi and chi subunits) which binds 3 Pol III cores (1 core on the leading strand and 2 on the lagging strand) each with a beta sliding clamp dimer. Additional proteins in the replisome are other copies of gamma, psi and chi, Ssb, DNA helicase and RNA primase.

Its subcellular location is the cytoplasm. Its function is as follows. Confers DNA tethering and processivity to DNA polymerases and other proteins. Acts as a clamp, forming a ring around DNA (a reaction catalyzed by the clamp-loading complex) which diffuses in an ATP-independent manner freely and bidirectionally along dsDNA. Initially characterized for its ability to contact the catalytic subunit of DNA polymerase III (Pol III), a complex, multichain enzyme responsible for most of the replicative synthesis in bacteria; Pol III exhibits 3'-5' exonuclease proofreading activity. The beta chain is required for initiation of replication as well as for processivity of DNA replication. The protein is Beta sliding clamp (dnaN) of Staphylococcus aureus (strain COL).